Here is a 64-residue protein sequence, read N- to C-terminus: U-scoloptoxin(14)-Er1a (64 aa).

Residues 1 to 23 (MRPSFPLLLIMLLVCTAHHMVSG) form the signal peptide.

This sequence belongs to the scoloptoxin-14 family. In terms of processing, contains 4 disulfide bonds. As to expression, expressed by the venom gland.

The protein localises to the secreted. In Ethmostigmus rubripes (Giant centipede), this protein is U-scoloptoxin(14)-Er1a.